Reading from the N-terminus, the 196-residue chain is Probable malonic semialdehyde reductase RutE (196 aa).

Belongs to the nitroreductase family. HadB/RutE subfamily. Requires FMN as cofactor.

The catalysed reaction is 3-hydroxypropanoate + NADP(+) = 3-oxopropanoate + NADPH + H(+). May reduce toxic product malonic semialdehyde to 3-hydroxypropionic acid, which is excreted. The sequence is that of Probable malonic semialdehyde reductase RutE from Enterobacter sp. (strain 638).